Here is an 84-residue protein sequence, read N- to C-terminus: Beta-defensin 119 (84 aa).

The N-terminal stretch at 1–21 is a signal peptide; it reads MKLLYLFLAILLAIEEPVISG. Disulfide bonds link Cys35/Cys49 and Cys39/Cys56.

Belongs to the beta-defensin family.

Its subcellular location is the secreted. Functionally, has antibacterial activity. The sequence is that of Beta-defensin 119 (DEFB119) from Pan troglodytes (Chimpanzee).